A 324-amino-acid chain; its full sequence is Viral cathepsin (324 aa).

Residues 1–16 (MNKIVLYLLVYGAVQC) form the signal peptide. Residues 17–113 (AAYDVLKAPN…VVLDRPPDKG (97 aa)) constitute a propeptide, activation peptide. Disulfide bonds link C134–C175, C168–C208, and C263–C311. Residue C137 is part of the active site. N159 is a glycosylation site (N-linked (GlcNAc...) asparagine; by host). Active-site residues include H270 and N290.

This sequence belongs to the peptidase C1 family. In terms of processing, synthesized as an inactive proenzyme and activated by proteolytic removal of the inhibitory propeptide.

The catalysed reaction is Endopeptidase of broad specificity, hydrolyzing substrates of both cathepsin L and cathepsin B.. In terms of biological role, cysteine protease that plays an essential role in host liquefaction to facilitate horizontal transmission of the virus. May participate in the degradation of foreign protein expressed by the baculovirus system. The polypeptide is Viral cathepsin (Vcath) (Choristoneura fumiferana nuclear polyhedrosis virus (CfMNPV)).